The following is a 317-amino-acid chain: USG-1 protein homolog (317 aa).

Belongs to the aspartate-semialdehyde dehydrogenase family.

In Haemophilus influenzae (strain ATCC 51907 / DSM 11121 / KW20 / Rd), this protein is USG-1 protein homolog (usg).